A 159-amino-acid chain; its full sequence is NADH-quinone oxidoreductase subunit I (159 aa).

4Fe-4S ferredoxin-type domains lie at 51–80 (RRYE…IESD) and 90–119 (TRYD…EGPN). The [4Fe-4S] cluster site is built by cysteine 60, cysteine 63, cysteine 66, cysteine 70, cysteine 99, cysteine 102, cysteine 105, and cysteine 109.

This sequence belongs to the complex I 23 kDa subunit family. NDH-1 is composed of 14 different subunits. Subunits NuoA, H, J, K, L, M, N constitute the membrane sector of the complex. [4Fe-4S] cluster serves as cofactor.

The protein resides in the cell inner membrane. The enzyme catalyses a quinone + NADH + 5 H(+)(in) = a quinol + NAD(+) + 4 H(+)(out). In terms of biological role, NDH-1 shuttles electrons from NADH, via FMN and iron-sulfur (Fe-S) centers, to quinones in the respiratory chain. The immediate electron acceptor for the enzyme in this species is believed to be ubiquinone. Couples the redox reaction to proton translocation (for every two electrons transferred, four hydrogen ions are translocated across the cytoplasmic membrane), and thus conserves the redox energy in a proton gradient. This Rickettsia typhi (strain ATCC VR-144 / Wilmington) protein is NADH-quinone oxidoreductase subunit I.